A 208-amino-acid polypeptide reads, in one-letter code: Uridine kinase (208 aa).

11-18 (GGTGSGKS) contributes to the ATP binding site.

This sequence belongs to the uridine kinase family.

It is found in the cytoplasm. The catalysed reaction is uridine + ATP = UMP + ADP + H(+). The enzyme catalyses cytidine + ATP = CMP + ADP + H(+). Its pathway is pyrimidine metabolism; CTP biosynthesis via salvage pathway; CTP from cytidine: step 1/3. It participates in pyrimidine metabolism; UMP biosynthesis via salvage pathway; UMP from uridine: step 1/1. The chain is Uridine kinase from Alkaliphilus metalliredigens (strain QYMF).